The chain runs to 120 residues: Small ribosomal subunit protein bS16 (120 aa).

Positions 80-120 are disordered; the sequence is GLKKRPARNNPHKGEPGKKAQERIAAAKQAAEDAKAAEASA. Over residues 81–90 the composition is skewed to basic residues; sequence LKKRPARNNP. Composition is skewed to basic and acidic residues over residues 91 to 101 and 109 to 120; these read HKGEPGKKAQE and AAEDAKAAEASA.

This sequence belongs to the bacterial ribosomal protein bS16 family.

The polypeptide is Small ribosomal subunit protein bS16 (Bartonella bacilliformis (strain ATCC 35685 / KC583 / Herrer 020/F12,63)).